The following is a 322-amino-acid chain: Transaldolase (322 aa).

Lys136 functions as the Schiff-base intermediate with substrate in the catalytic mechanism.

The protein belongs to the transaldolase family. Type 1 subfamily. In terms of assembly, homodimer.

Its subcellular location is the cytoplasm. The catalysed reaction is D-sedoheptulose 7-phosphate + D-glyceraldehyde 3-phosphate = D-erythrose 4-phosphate + beta-D-fructose 6-phosphate. It functions in the pathway carbohydrate degradation; pentose phosphate pathway; D-glyceraldehyde 3-phosphate and beta-D-fructose 6-phosphate from D-ribose 5-phosphate and D-xylulose 5-phosphate (non-oxidative stage): step 2/3. Its function is as follows. Transaldolase is important for the balance of metabolites in the pentose-phosphate pathway. The sequence is that of Transaldolase from Xanthomonas euvesicatoria pv. vesicatoria (strain 85-10) (Xanthomonas campestris pv. vesicatoria).